A 301-amino-acid polypeptide reads, in one-letter code: Hydroxymethylglutaryl-CoA lyase (301 aa).

Residues valine 4 to alanine 271 form the Pyruvate carboxyltransferase domain. Arginine 12 contributes to the substrate binding site. A divalent metal cation is bound by residues aspartate 13, histidine 204, and histidine 206. Cysteine 237 is a catalytic residue. Asparagine 246 contacts a divalent metal cation.

This sequence belongs to the HMG-CoA lyase family.

The catalysed reaction is (3S)-3-hydroxy-3-methylglutaryl-CoA = acetoacetate + acetyl-CoA. Its pathway is metabolic intermediate metabolism; (S)-3-hydroxy-3-methylglutaryl-CoA degradation; acetoacetate from (S)-3-hydroxy-3-methylglutaryl-CoA: step 1/1. In terms of biological role, involved in the catabolism of branched amino acids such as leucine. This Pseudomonas mevalonii protein is Hydroxymethylglutaryl-CoA lyase (mvaB).